We begin with the raw amino-acid sequence, 93 residues long: FMRFamide-like neuropeptides 22 (93 aa).

The N-terminal stretch at 1–19 is a signal peptide; it reads MNRSMIALCVVLMVSLVSA. A propeptide spanning residues 20 to 46 is cleaved from the precursor; sequence QVFDLDGQQLAGLEQNDARLMEQQVKR. A phenylalanine amide mark is found at F55, F67, and F79. A propeptide spanning residues 83–93 is cleaved from the precursor; it reads SGAEAVSEQDY.

It belongs to the FARP (FMRFamide related peptide) family.

Its subcellular location is the secreted. In terms of biological role, FMRFamides and FMRFamide-like peptides are neuropeptides. Functionally, SPSAKWMRF-amide: Acts as a ligand for the npr-22 receptor in vitro. The protein is FMRFamide-like neuropeptides 22 of Caenorhabditis elegans.